Here is a 351-residue protein sequence, read N- to C-terminus: Phospho-N-acetylmuramoyl-pentapeptide-transferase (351 aa).

Helical transmembrane passes span 17 to 37, 63 to 83, 85 to 105, 124 to 144, 158 to 178, 190 to 210, 230 to 250, 254 to 274, 279 to 299, and 328 to 348; these read TAYATIFAFLLALIFGPFIIL, IPTMGGILIFFCVLVSLFFWI, FWNIYFLIILFVMVSFACLGF, FKIYGQILFSCISVTMLYYFG, SLKLDLGVLYIPFGMFILISA, GLAIGLSIVVTGALVIIAYLA, LVVFLGALLGGSFGFLWFNAY, IMMGDTGSLSIGAVLGMTALI, ILFAILAGVFVVETLSVIIQV, and QVVIRFWIIGLIFAIIALSTL.

Belongs to the glycosyltransferase 4 family. MraY subfamily. Mg(2+) is required as a cofactor.

It localises to the cell inner membrane. The enzyme catalyses UDP-N-acetyl-alpha-D-muramoyl-L-alanyl-gamma-D-glutamyl-meso-2,6-diaminopimeloyl-D-alanyl-D-alanine + di-trans,octa-cis-undecaprenyl phosphate = di-trans,octa-cis-undecaprenyl diphospho-N-acetyl-alpha-D-muramoyl-L-alanyl-D-glutamyl-meso-2,6-diaminopimeloyl-D-alanyl-D-alanine + UMP. The protein operates within cell wall biogenesis; peptidoglycan biosynthesis. In terms of biological role, catalyzes the initial step of the lipid cycle reactions in the biosynthesis of the cell wall peptidoglycan: transfers peptidoglycan precursor phospho-MurNAc-pentapeptide from UDP-MurNAc-pentapeptide onto the lipid carrier undecaprenyl phosphate, yielding undecaprenyl-pyrophosphoryl-MurNAc-pentapeptide, known as lipid I. The polypeptide is Phospho-N-acetylmuramoyl-pentapeptide-transferase (Borrelia turicatae (strain 91E135)).